The following is a 193-amino-acid chain: Activity-regulated cytoskeleton associated protein 2 (193 aa).

Belongs to the ARC/ARG3.1 family. As to quaternary structure, homooligomer; homooligomerizes into virion-like capsids.

It is found in the extracellular vesicle membrane. Self-assembles into virion-like capsids that encapsulate RNAs and mediate intercellular RNA transfer. Arc2 protein is released from cells in extracellular vesicles that mediate the transfer of mRNA into neighboring cells. In Drosophila melanogaster (Fruit fly), this protein is Activity-regulated cytoskeleton associated protein 2.